The chain runs to 245 residues: Ribonuclease 3 (245 aa).

Residues 18-146 enclose the RNase III domain; the sequence is LSEFLENLSI…FVGAIYLDSG (129 aa). Glutamate 59 provides a ligand contact to Mg(2+). Residue aspartate 63 is part of the active site. The Mg(2+) site is built by aspartate 132 and glutamate 135. Glutamate 135 is an active-site residue. The DRBM domain occupies 173 to 242; sequence DYKSLLQEYV…AEVALKAMED (70 aa).

This sequence belongs to the ribonuclease III family. As to quaternary structure, homodimer. Mg(2+) serves as cofactor.

Its subcellular location is the cytoplasm. It carries out the reaction Endonucleolytic cleavage to 5'-phosphomonoester.. In terms of biological role, digests double-stranded RNA. Involved in the processing of primary rRNA transcript to yield the immediate precursors to the large and small rRNAs (23S and 16S). Processes some mRNAs, and tRNAs when they are encoded in the rRNA operon. Processes pre-crRNA and tracrRNA of type II CRISPR loci if present in the organism. This chain is Ribonuclease 3, found in Borreliella afzelii (strain PKo) (Borrelia afzelii).